A 586-amino-acid chain; its full sequence is Protein translocase subunit SecD (586 aa).

6 consecutive transmembrane segments (helical) span residues 7 to 27 (LILILLVTFFACLLIFPTLKW), 418 to 438 (SALALCLVFLFICVYYGLSGV), 439 to 459 (VAGFSLVIYNVFLILAILSAF), 465 to 485 (LTSIAGLILTMGMAVDINIVI), 521 to 541 (TFIAVLFLTLLGTGVIQGFAW), and 546 to 566 (GIVASLFSSLIFSRFILEFII).

Belongs to the SecD/SecF family. SecD subfamily. Forms a complex with SecF. Part of the essential Sec protein translocation apparatus which comprises SecA, SecYEG and auxiliary proteins SecDF. Other proteins may also be involved.

The protein resides in the cell inner membrane. Part of the Sec protein translocase complex. Interacts with the SecYEG preprotein conducting channel. SecDF uses the proton motive force (PMF) to complete protein translocation after the ATP-dependent function of SecA. In Borreliella burgdorferi (strain ATCC 35210 / DSM 4680 / CIP 102532 / B31) (Borrelia burgdorferi), this protein is Protein translocase subunit SecD.